A 501-amino-acid polypeptide reads, in one-letter code: ATP synthase subunit alpha (501 aa).

169–176 (GDRQTGKT) is a binding site for ATP.

This sequence belongs to the ATPase alpha/beta chains family. As to quaternary structure, F-type ATPases have 2 components, CF(1) - the catalytic core - and CF(0) - the membrane proton channel. CF(1) has five subunits: alpha(3), beta(3), gamma(1), delta(1), epsilon(1). CF(0) has three main subunits: a(1), b(2) and c(9-12). The alpha and beta chains form an alternating ring which encloses part of the gamma chain. CF(1) is attached to CF(0) by a central stalk formed by the gamma and epsilon chains, while a peripheral stalk is formed by the delta and b chains.

Its subcellular location is the cell membrane. The catalysed reaction is ATP + H2O + 4 H(+)(in) = ADP + phosphate + 5 H(+)(out). In terms of biological role, produces ATP from ADP in the presence of a proton gradient across the membrane. The alpha chain is a regulatory subunit. This Streptococcus pneumoniae (strain 70585) protein is ATP synthase subunit alpha.